We begin with the raw amino-acid sequence, 717 residues long: Inhibitor of nuclear factor kappa-B kinase subunit epsilon (717 aa).

A Protein kinase domain is found at 9–315; sequence WHTDDLLGQG…LQRTVIHVFS (307 aa). ATP is bound at residue 15–23; sequence LGQGATASV. Lys-30 is covalently cross-linked (Glycyl lysine isopeptide (Lys-Gly) (interchain with G-Cter in ubiquitin)). Residue Lys-38 participates in ATP binding. Residue Asp-135 is the Proton acceptor of the active site. Residue Ser-172 is modified to Phosphoserine; by autocatalysis and IKKB. A Glycyl lysine isopeptide (Lys-Gly) (interchain with G-Cter in SUMO1) cross-link involves residue Lys-231. The interval 385–650 is interaction with DDX3X; sequence SSDTPKGLAF…AQESLNKIFD (266 aa). A Glycyl lysine isopeptide (Lys-Gly) (interchain with G-Cter in ubiquitin) cross-link involves residue Lys-403. Residues 452–473 form a leucine-zipper region; it reads LQDTCQQTLEVTRTALLYLSSS. Position 503 is a phosphothreonine (Thr-503). Position 665 is a phosphoserine (Ser-665).

It belongs to the protein kinase superfamily. Ser/Thr protein kinase family. I-kappa-B kinase subfamily. In terms of assembly, homodimer. Interacts with MAVS/IPS1. Interacts (via protein kinase domain) with TTLL12 (via N-terminus); the interaction prevents MAVS binding to IKBKE. Interacts with the adapter proteins AZI2/NAP1, TANK and TBKBP1/SINTBAD. Interacts with SIKE1. Interacts with TICAM1/TRIF, IRF3 and RIGI; interactions are disrupted by the interaction between IKBKE and SIKE1. Interacts with TOPORS; induced by DNA damage. Interacts with CYLD, IKBKB, IKBKG and MYD88. Interacts with IFIH1. Interacts with DDX3X; the interaction may be induced upon virus infection. Interacts with TRIM6 (via SPRY box). Interacts with unanchored K48-linked polyubiquitin chains; this leads to IKBKE activation. Interacts with TBK1. Interacts with FKBP5. In terms of processing, sumoylation by TOPORS upon DNA damage is required for protection of cells against DNA damage-induced cell death. Desumoylated by SENP1. Autophosphorylated and phosphorylated by IKBKB/IKKB. Phosphorylation at Ser-172 is enhanced by the interaction with DDX3X. Phosphorylated at Thr-503 upon IFN activation. Post-translationally, 'Lys-63'-linked polyubiquitinated at Lys-30 and Lys-403 by TRAF2:BIRC2 and TRAF2:BIRC3 complexes. Ubiquitination is induced by LPS, TNFA and interleukin-1 and required for full kinase activity and KF-kappa-B pathway activation. Expressed in bone marrow-derived macrophages and at low levels in liver and white adipose tissue (at protein level). Detected in muscle and lung.

The protein localises to the cytoplasm. It is found in the nucleus. It localises to the PML body. The enzyme catalyses L-seryl-[I-kappa-B protein] + ATP = O-phospho-L-seryl-[I-kappa-B protein] + ADP + H(+). Kinase activity is inhibited competitively by amlexanox. Its function is as follows. Serine/threonine kinase that plays an essential role in regulating inflammatory responses to viral infection, through the activation of the type I IFN, NF-kappa-B and STAT signaling. Also involved in TNFA and inflammatory cytokines, like Interleukin-1, signaling. Following activation of viral RNA sensors, such as RIG-I-like receptors, associates with DDX3X and phosphorylates interferon regulatory factors (IRFs), IRF3 and IRF7, as well as DDX3X. This activity allows subsequent homodimerization and nuclear translocation of the IRF3 leading to transcriptional activation of pro-inflammatory and antiviral genes including IFNB. In order to establish such an antiviral state, IKBKE forms several different complexes whose composition depends on the type of cell and cellular stimuli. Thus, several scaffolding molecules including IPS1/MAVS, TANK, AZI2/NAP1 or TBKBP1/SINTBAD can be recruited to the IKBKE-containing-complexes. Activated by polyubiquitination in response to TNFA and interleukin-1, regulates the NF-kappa-B signaling pathway through, at least, the phosphorylation of CYLD. Phosphorylates inhibitors of NF-kappa-B thus leading to the dissociation of the inhibitor/NF-kappa-B complex and ultimately the degradation of the inhibitor. In addition, is also required for the induction of a subset of ISGs which displays antiviral activity, may be through the phosphorylation of STAT1 at 'Ser-708'. Phosphorylation of STAT1 at 'Ser-708' also seems to promote the assembly and DNA binding of ISGF3 (STAT1:STAT2:IRF9) complexes compared to GAF (STAT1:STAT1) complexes, in this way regulating the balance between type I and type II IFN responses. Protects cells against DNA damage-induced cell death. Also plays an important role in energy balance regulation by sustaining a state of chronic, low-grade inflammation in obesity, wich leads to a negative impact on insulin sensitivity. Phosphorylates AKT1. In Mus musculus (Mouse), this protein is Inhibitor of nuclear factor kappa-B kinase subunit epsilon (Ikbke).